The sequence spans 61 residues: Small ribosomal subunit protein uS14 (61 aa).

Residues Cys-24, Cys-27, Cys-40, and Cys-43 each coordinate Zn(2+).

The protein belongs to the universal ribosomal protein uS14 family. Zinc-binding uS14 subfamily. In terms of assembly, part of the 30S ribosomal subunit. Contacts proteins S3 and S10. Zn(2+) serves as cofactor.

Its function is as follows. Binds 16S rRNA, required for the assembly of 30S particles and may also be responsible for determining the conformation of the 16S rRNA at the A site. This chain is Small ribosomal subunit protein uS14, found in Ureaplasma parvum serovar 3 (strain ATCC 27815 / 27 / NCTC 11736).